A 509-amino-acid chain; its full sequence is Transcription factor SOX-9 (509 aa).

Disordered regions lie at residues 1 to 67 and 160 to 273; these read MNLL…SEED and RLRV…FRDV. Low complexity predominate over residues 30 to 41; the sequence is SAGSPCPSGSGS. Positions 42–52 are enriched in polar residues; that stretch reads DTENTRPQENT. Composition is skewed to basic and acidic residues over residues 56 to 67 and 160 to 174; these read GEPDLKKESEED and RLRV…DYKY. Residues 63–103 form a dimerization (DIM) region; that stretch reads ESEEDKFPVCIREAVSQVLKGYDWTLVPMPVRVNGSSKNKP. A PQA region spans residues 63 to 103; that stretch reads ESEEDKFPVCIREAVSQVLKGYDWTLVPMPVRVNGSSKNKP. Residue Ser-64 is modified to Phosphoserine. Positions 105–173 form a DNA-binding region, HMG box; it reads VKRPMNAFMV…QHKKDHPDYK (69 aa). Ser-211 bears the Phosphoserine mark. Residues 224–307 form a transactivation domain (TAM) region; that stretch reads PGEHSGQSQG…LPPNGHPGVP (84 aa). Short sequence motifs (9aaTAD) lie at residues 275-284 and 290-298; these read IGELSSDVIS and DVNEFDQYL. The disordered stretch occupies residues 334–415; that stretch reads VWMSKQQAPP…HYSEQQQHSP (82 aa). Positions 341–376 are enriched in pro residues; the sequence is APPPPPQQPPQAPPAPQAPPQPQAAPPQQPAAPPQQ. The segment covering 380–415 has biased composition (polar residues); sequence HTLTTLSSEPGQSQRTHIKTEQLSPSHYSEQQQHSP. Residues 394-509 are transactivation domain (TAC); sequence RTHIKTEQLS…QPVYTQLTRP (116 aa). Lys-398 participates in a covalent cross-link: Glycyl lysine isopeptide (Lys-Gly) (interchain with G-Cter in ubiquitin). The short motif at 460 to 468 is the 9aaTAD 3 element; sequence TGLYSTFTY. The interval 479–509 is disordered; that stretch reads PIADTSGVPSIPQTHSPQHWEQPVYTQLTRP. Residues 485–509 show a composition bias toward polar residues; that stretch reads GVPSIPQTHSPQHWEQPVYTQLTRP.

Homodimer; homodimerization is required for activity. Interacts (via C-terminus) with ZNF219; forming a complex that binds to the COL2A1 promoter and activates COL2A1 expression. Interacts with DDRGK1. Interacts with EP300/p300. Interacts with beta-catenin (CTNNB1); inhibiting CTNNB1 activity by competing with the binding sites of TCF/LEF within CTNNB1. Acetylated; acetylation impairs nuclear localization and ability to transactivate expression of target genes. Deacetylated by SIRT1. In terms of processing, phosphorylation at Ser-64 and Ser-211 by PKA increases transcriptional activity and may help delay chondrocyte maturation downstream of PTHLH/PTHrP signaling. Phosphorylation at either Ser-64 or Ser-211 is required for sumoylation, but phosphorylation is not dependent on sumoylation. Phosphorylated on tyrosine residues; tyrosine dephosphorylation by PTPN11/SHP2 blocks SOX9 phosphorylation by PKA and subsequent SUMOylation. Post-translationally, sumoylated; phosphorylation at either Ser-64 or Ser-211 is required for sumoylation. Sumoylation is induced by BMP signaling pathway. Ubiquitinated; ubiquitination leads to proteasomal degradation and is negatively regulated by DDRGK1.

Its subcellular location is the nucleus. Functionally, transcription factor that plays a key role in chondrocytes differentiation and skeletal development. Specifically binds the 5'-ACAAAG-3' DNA motif present in enhancers and super-enhancers and promotes expression of genes important for chondrogenesis, including cartilage matrix protein-coding genes COL2A1, COL4A2, COL9A1, COL11A2 and ACAN, SOX5 and SOX6. Also binds to some promoter regions. Plays a central role in successive steps of chondrocyte differentiation. Absolutely required for precartilaginous condensation, the first step in chondrogenesis during which skeletal progenitors differentiate into prechondrocytes. Together with SOX5 and SOX6, required for overt chondrogenesis when condensed prechondrocytes differentiate into early stage chondrocytes, the second step in chondrogenesis. Later, required to direct hypertrophic maturation and block osteoblast differentiation of growth plate chondrocytes: maintains chondrocyte columnar proliferation, delays prehypertrophy and then prevents osteoblastic differentiation of chondrocytes by lowering beta-catenin (CTNNB1) signaling and RUNX2 expression. Also required for chondrocyte hypertrophy, both indirectly, by keeping the lineage fate of chondrocytes, and directly, by remaining present in upper hypertrophic cells and transactivating COL10A1 along with MEF2C. Low lipid levels are the main nutritional determinant for chondrogenic commitment of skeletal progenitor cells: when lipids levels are low, FOXO (FOXO1 and FOXO3) transcription factors promote expression of SOX9, which induces chondrogenic commitment and suppresses fatty acid oxidation. Mechanistically, helps, but is not required, to remove epigenetic signatures of transcriptional repression and deposit active promoter and enhancer marks at chondrocyte-specific genes. Acts in cooperation with the Hedgehog pathway-dependent GLI (GLI1 and GLI3) transcription factors. In addition to cartilage development, also acts as a regulator of proliferation and differentiation in epithelial stem/progenitor cells: involved in the lung epithelium during branching morphogenesis, by balancing proliferation and differentiation and regulating the extracellular matrix. Controls epithelial branching during kidney development. The sequence is that of Transcription factor SOX-9 (SOX9) from Callithrix jacchus (White-tufted-ear marmoset).